Reading from the N-terminus, the 334-residue chain is TPR repeat-containing protein YsoA (334 aa).

TPR repeat units follow at residues 17-50 (KDRLVEKGMSSLKEKKYQEALELFSEAMKYDDTE), 52-84 (DLHLGMAICFLELGELEEAESVCEKMLKEGYGH), and 195-230 (HPIIKTMIVMLLAEHEYSKPVHISKFGESLTIEPSE).

This Bacillus subtilis (strain 168) protein is TPR repeat-containing protein YsoA (ysoA).